The following is a 382-amino-acid chain: Galactokinase (382 aa).

34–37 contributes to the substrate binding site; sequence EHTD. 124 to 130 contacts ATP; the sequence is GAGLSSS. Mg(2+) contacts are provided by Ser-130 and Glu-162. The Proton acceptor role is filled by Asp-174. Position 223 (Tyr-223) interacts with substrate.

It belongs to the GHMP kinase family. GalK subfamily.

The protein resides in the cytoplasm. It catalyses the reaction alpha-D-galactose + ATP = alpha-D-galactose 1-phosphate + ADP + H(+). It participates in carbohydrate metabolism; galactose metabolism. In terms of biological role, catalyzes the transfer of the gamma-phosphate of ATP to D-galactose to form alpha-D-galactose-1-phosphate (Gal-1-P). This is Galactokinase from Escherichia coli O9:H4 (strain HS).